Consider the following 346-residue polypeptide: Dihydroorotate dehydrogenase (quinone) (346 aa).

Residues 61–65 and threonine 85 each bind FMN; that span reads AGLDK. Substrate is bound at residue lysine 65. 110-114 contributes to the substrate binding site; that stretch reads NRMGF. The FMN site is built by asparagine 138 and asparagine 171. Asparagine 171 lines the substrate pocket. The active-site Nucleophile is serine 174. Residue asparagine 176 participates in substrate binding. The FMN site is built by lysine 216 and threonine 244. Substrate is bound at residue 245-246; sequence NT. FMN contacts are provided by residues glycine 267, glycine 296, and 317 to 318; that span reads YS.

Belongs to the dihydroorotate dehydrogenase family. Type 2 subfamily. Monomer. FMN serves as cofactor.

It is found in the cell membrane. It catalyses the reaction (S)-dihydroorotate + a quinone = orotate + a quinol. It participates in pyrimidine metabolism; UMP biosynthesis via de novo pathway; orotate from (S)-dihydroorotate (quinone route): step 1/1. Catalyzes the conversion of dihydroorotate to orotate with quinone as electron acceptor. The polypeptide is Dihydroorotate dehydrogenase (quinone) (Marinomonas sp. (strain MWYL1)).